Reading from the N-terminus, the 250-residue chain is GPI-anchored hemophore PGA10 (250 aa).

The signal sequence occupies residues 1-20 (MMSFSLLSIVSIALAATVSA). The region spanning 26 to 137 (NAYTAYPSVA…DALAKAANAA (112 aa)) is the CFEM domain. 4 disulfides stabilise this stretch: Cys54-Cys94, Cys58-Cys89, Cys68-Cys75, and Cys77-Cys110. Residue Asp72 participates in heme binding. Positions 165–219 (STSHESKVAETSVAQQTASTEKSSAAETSRAKETSKAEESSKAEETSVAQSSSSA) are disordered. Positions 178 to 192 (AQQTASTEKSSAAET) are enriched in low complexity. Basic and acidic residues predominate over residues 193–209 (SRAKETSKAEESSKAEE). Positions 210–219 (TSVAQSSSSA) are enriched in low complexity. Residue Asn230 is the site of GPI-anchor amidated asparagine attachment. Positions 231–250 (AGNMPVIAIGGVIAAFAALI) are cleaved as a propeptide — removed in mature form.

Belongs to the RBT5 family. Post-translationally, the GPI-anchor is attached to the protein in the endoplasmic reticulum and serves to target the protein to the cell surface. There, the glucosamine-inositol phospholipid moiety is cleaved off and the GPI-modified mannoprotein is covalently attached via its lipidless GPI glycan remnant to the 1,6-beta-glucan of the outer cell wall layer. In terms of processing, mannosylated.

The protein localises to the secreted. The protein resides in the cell wall. It localises to the cell membrane. Functionally, heme-binding protein involved in heme-iron utilization. The ability to acquire iron from host tissues is a major virulence factor of pathogenic microorganisms. Involved in biofilm formation. The chain is GPI-anchored hemophore PGA10 from Candida albicans (strain SC5314 / ATCC MYA-2876) (Yeast).